The sequence spans 217 residues: Probable transaldolase (217 aa).

Catalysis depends on lysine 83, which acts as the Schiff-base intermediate with substrate.

The protein belongs to the transaldolase family. Type 3B subfamily.

The protein localises to the cytoplasm. The enzyme catalyses D-sedoheptulose 7-phosphate + D-glyceraldehyde 3-phosphate = D-erythrose 4-phosphate + beta-D-fructose 6-phosphate. It participates in carbohydrate degradation; pentose phosphate pathway; D-glyceraldehyde 3-phosphate and beta-D-fructose 6-phosphate from D-ribose 5-phosphate and D-xylulose 5-phosphate (non-oxidative stage): step 2/3. Its function is as follows. Transaldolase is important for the balance of metabolites in the pentose-phosphate pathway. The sequence is that of Probable transaldolase from Sinorhizobium medicae (strain WSM419) (Ensifer medicae).